The sequence spans 260 residues: Hydroxyethylthiazole kinase 1 (260 aa).

Position 39 (Met39) interacts with substrate. ATP-binding residues include Arg115 and Thr160. Gly187 contributes to the substrate binding site.

Belongs to the Thz kinase family. Mg(2+) is required as a cofactor.

It carries out the reaction 5-(2-hydroxyethyl)-4-methylthiazole + ATP = 4-methyl-5-(2-phosphooxyethyl)-thiazole + ADP + H(+). It participates in cofactor biosynthesis; thiamine diphosphate biosynthesis; 4-methyl-5-(2-phosphoethyl)-thiazole from 5-(2-hydroxyethyl)-4-methylthiazole: step 1/1. In terms of biological role, catalyzes the phosphorylation of the hydroxyl group of 4-methyl-5-beta-hydroxyethylthiazole (THZ). This Streptococcus pneumoniae serotype 19F (strain G54) protein is Hydroxyethylthiazole kinase 1.